A 238-amino-acid chain; its full sequence is tRNA (guanine-N(1)-)-methyltransferase (238 aa).

Residues Gly-109 and 129-134 (IGDFVL) each bind S-adenosyl-L-methionine.

The protein belongs to the RNA methyltransferase TrmD family. In terms of assembly, homodimer.

It is found in the cytoplasm. It carries out the reaction guanosine(37) in tRNA + S-adenosyl-L-methionine = N(1)-methylguanosine(37) in tRNA + S-adenosyl-L-homocysteine + H(+). Specifically methylates guanosine-37 in various tRNAs. This chain is tRNA (guanine-N(1)-)-methyltransferase, found in Exiguobacterium sp. (strain ATCC BAA-1283 / AT1b).